A 292-amino-acid chain; its full sequence is AKT-interacting protein homolog B (292 aa).

Positions 1–44 are disordered; that stretch reads MNPFWNMPSASVRKRSDNDEKIATADQKISPARSSSAKKQLPSI. Basic and acidic residues predominate over residues 14-23; it reads KRSDNDEKIA. The UBC core domain occupies 75–223; that stretch reads YLEYSLLAEF…VVDSVKLCNS (149 aa).

The protein belongs to the ubiquitin-conjugating enzyme family. FTS subfamily.

It localises to the cytoplasm. The protein localises to the cell membrane. Its function is as follows. May function to promote vesicle trafficking and/or fusion. May also regulate apoptosis. The sequence is that of AKT-interacting protein homolog B (aktip-b) from Xenopus laevis (African clawed frog).